Reading from the N-terminus, the 175-residue chain is Regenerating islet-derived protein 3-gamma (175 aa).

The N-terminal stretch at 1–26 (MLPPMALPSVSWMLLSCLILLCQVQG) is a signal peptide. Residues 27 to 37 (EETQKELPSPR) constitute a propeptide that is removed on maturation. Intrachain disulfides connect Cys-40-Cys-51, Cys-68-Cys-171, and Cys-146-Cys-163. In terms of domain architecture, C-type lectin spans 47 to 172 (YGSPCYALFL…CDAKLPYVCK (126 aa)). Positions 103–118 (WIGLHDPTQGSEPDGD) are sufficient to activate EXTL3. His-107 lines the Zn(2+) pocket. Positions 114-116 (EPD) match the EPN motif. Positions 121 and 145 each coordinate Zn(2+).

In terms of assembly, forms a hexameric membrane-permeabilizing oligomeric pore on membrane phospholipids. The hexamer is formed by three dimers related by helical symmetry. Forms filaments, filamentation traps pore complexes and limits damage to host cells. Interacts with EXTL3. Post-translationally, proteolytic processing by trypsin removes an inhibitory N-terminal propeptide and is essential for peptidoglycan binding and antibacterial activity. Predominantly expressed in pancreas, where it may be restricted to exocrine pancreas. Moderate expression levels in testis and weak in heart, kidney and placenta.

The protein localises to the secreted. It localises to the cytoplasm. Its activity is regulated as follows. Lipopolysaccharide inhibits pore-forming activity, explaining why is bactericidal for Gram-positive but not Gram-negative bacteria. Functionally, bactericidal C-type lectin which acts exclusively against Gram-positive bacteria and mediates bacterial killing by binding to surface-exposed carbohydrate moieties of peptidoglycan. Restricts bacterial colonization of the intestinal epithelial surface and consequently limits activation of adaptive immune responses by the microbiota. Its function is as follows. Acts as a hormone in response to different stimuli like anti-inflammatory signals, such as IL17A, or gut microbiome. Is secreted by different cell types to activate its receptor EXTL3 and induce cell specific signaling pathways. Induced by IL17A in keratinocytes, regulates keratinocyte proliferation and differentiation after skin injury. In parallel, inhibits skin inflammation through the inhibition of inflammatory cytokines such as IL6 and TNF. Induced by IL22 in lung epithelial cells, inhibits cytokine production and regulates allergic airway inflammation. Induced in small intestine by inulin-enriched diet and Lactobacillus gasseri enriched microbiome, plays a role in the improvement of gut barrier function, the regulation of energy balance and glucose levels. Modulates microbiota composition in duodenal contents. Produced by nociceptor in response to endotoxins, prevents endotoxic death by targeting kynurenine pathway in microglia. In terms of biological role, has bacteriostatic activity. Has bactericidal activity against L.monocytogenes and methicillin-resistant S.aureus. This is Regenerating islet-derived protein 3-gamma from Homo sapiens (Human).